We begin with the raw amino-acid sequence, 122 residues long: Small ribosomal subunit protein uS12 (122 aa).

Residue aspartate 89 is modified to 3-methylthioaspartic acid.

It belongs to the universal ribosomal protein uS12 family. As to quaternary structure, part of the 30S ribosomal subunit. Contacts proteins S8 and S17. May interact with IF1 in the 30S initiation complex.

Functionally, with S4 and S5 plays an important role in translational accuracy. Its function is as follows. Interacts with and stabilizes bases of the 16S rRNA that are involved in tRNA selection in the A site and with the mRNA backbone. Located at the interface of the 30S and 50S subunits, it traverses the body of the 30S subunit contacting proteins on the other side and probably holding the rRNA structure together. The combined cluster of proteins S8, S12 and S17 appears to hold together the shoulder and platform of the 30S subunit. The protein is Small ribosomal subunit protein uS12 of Neorickettsia sennetsu (strain ATCC VR-367 / Miyayama) (Ehrlichia sennetsu).